Here is a 765-residue protein sequence, read N- to C-terminus: MATFQEFIQQNEDRDGVRFSWNVWPSSRLEATRMVVPVASLFTPLKERPDLPPIQYEPVLCSRATCRAVLNPLCQVDYRAKLWACNFCYQRNQFPPTYAGISEVNQPAELLPQFSTIEYVVQRGPQMPLNFLYVVDTCMEDDDLQALKESLQMSLSLLPPTALVGLITFGRMVQVHELGCEGISKSYVFRGTKDLNAKQLQEMLGLTKPAAAQAGRGPQQPQVPPSNRFLQPVQKIDMNLTDLLGELQRDPWPVTQGKRPLRSLGVALSIAVGLLECTFPNTGARIMAFIGGPATQGPGMVVGDELKTPIRSWHDIEKDNAKFMKKATKHYEALANRAAANGHIIDIYACALDQTGLLEMKCCTNYTGGYMVMADSFNTSLFKQTFQRVFTKDVQGCFKMALAGTLEIKTSREIKISGAIGPCVSLNAKGPCVSENEMGTGGTSQWKICGLDPNTTLGFYFEVVNQHNAPIPQGGRGAIQYVTQYQHSSGQRRIRVTTIARNWADAQSQIQSIAASFDQEAAAILMARLAVYKAETEEGPDVLRWLDRQLIRLCQKFGDYHKEDPNSFRFSETFSLYPQFMFHLRRSPFLQVFNNSPDESTYYRHQFMRQDLTQSLIMVQPILYAYSFNGPPEPVLLDSSSILPDRILLMDTFFQILIYHGETVSQWRKAGYQDMPEYENFRHLLQAPVDDAQELLHTRFPMPRYIDTEHGGSQARFLLSKVNPSQTHNNMYAWGQESGAPILTDDVSLQVFMDHLKKLAVSSAA.

Positions 61, 66, 85, and 88 each coordinate Zn(2+). Residues 632 to 718 form a Gelsolin-like repeat; the sequence is PEPVLLDSSS…EHGGSQARFL (87 aa).

It belongs to the SEC23/SEC24 family. SEC23 subfamily. As to quaternary structure, COPII is composed of at least five proteins: the Sec23/24 complex, the Sec13/31 complex and Sar1.

It localises to the cytoplasmic vesicle. The protein localises to the COPII-coated vesicle membrane. The protein resides in the endoplasmic reticulum membrane. It is found in the cytoplasm. Its subcellular location is the cytosol. Its function is as follows. Component of the coat protein complex II (COPII) which promotes the formation of transport vesicles from the endoplasmic reticulum (ER). The coat has two main functions, the physical deformation of the endoplasmic reticulum membrane into vesicles and the selection of cargo molecules for their transport to the Golgi complex. This chain is Protein transport protein Sec23A, found in Danio rerio (Zebrafish).